The sequence spans 95 residues: UPF0512 protein H (95 aa).

Belongs to the UPF0512 family.

This Dictyostelium discoideum (Social amoeba) protein is UPF0512 protein H.